We begin with the raw amino-acid sequence, 1032 residues long: MDSKSRGKSRLNRSILTLVSFFGLVLFYLTWYLYTRGLTGADSPGCRIVYMGPSYARITAFDESHTKFASKYSLYLYREQGRDPLPDENEGFKHLGGIPILFIPGNAGSYRQVRSIAAETSDIYFDHYLDQPDGLNPNAKNYDFFTADFNEDFTAFHGRTLLDQAEYLNEAIKFILGLYANSEHPPRSVVVLGHSMGGVVSRVMVSLPNYIPDSINTIITLASPHAAAPLTFDGDILKIYSAVDRFWFQGYDNKETDNTIAKIAKERLSKISLISITGGLLDSILPADYTTLGYLVPPTNGFTVYTTGIPGVWTPIDHLAIVWCAQLRRRVSNALLEIANFDSPDKTYSLEKRMEIMRKNFLSGFEDYTSQDKVAYDKPADHILLKADSQQINFVQEGQKLKVTPGKMPSPLNVFRLPSPKVSKVQFSLLSSMDIGELKSDNNEGYTQPTLLLCNTMDAIKEDANIIDFTNKETTEIVMFKCIDVRDDSNMIPRSAVGTYSLSESSIGGDKSPFYAIQYNSTILKQYDTVIVTGSLGMESNDNENFLLAELSDYNSSQFNIHEDLFSLMTRGAKFSLPLDKPLSMNIKIPGAWSSILAYKLKVSWPEDRETTEYIPVFRTFIRQWSNEPYEVKWHVNIEANNQVLLNMHGIAPYTPFKVKSKEEYGLNIEIWTDSIPDKSLTTIRLRIDLLNSLRLLVLRYRLATISFCVSIILLALVFQVKHYKETNKFPTFLYGLSCICSPWVFGSILFTLSILTPIMSIKPLQKFLNVIDPVVLQDSNEINLSLTDEFKLNSFFLGLEEKSLWFIGPVFFVMGLGIVSLTFYSLLVAGNVIASISRVLLKRLKLSQTEKKQPNPGKLWANRRIIGVLFVLLVIPIYMPYQFAYVVSCIIQSIQVIKILVADKTNKSILNYHLSLLMLMLWVLPINVPILVVFVHNMTINWTTPFSSHHNFLAILPVILLMERYSNSRTLPKMSQTKYKVTQAFLAYYVFYCLVYGIRHTYWIHHLFNLLCCWLLVLHYDAQDDTSDHVQ.

N-linked (GlcNAc...) asparagine glycosylation occurs at asparagine 12. A helical membrane pass occupies residues 15–35 (ILTLVSFFGLVLFYLTWYLYT). Residue serine 195 is part of the active site. Asparagine 520 and asparagine 555 each carry an N-linked (GlcNAc...) asparagine glycan. Helical transmembrane passes span 703–723 (LATISFCVSIILLALVFQVKH) and 740–760 (ICSPWVFGSILFTLSILTPIM). Asparagine 784 carries N-linked (GlcNAc...) asparagine glycosylation. 3 helical membrane-spanning segments follow: residues 805–825 (LWFIGPVFFVMGLGIVSLTFY), 861–880 (WANRRIIGVLFVLLVIPIYM), and 884–903 (FAYVVSCIIQSIQVIKILVA). Residue asparagine 907 is glycosylated (N-linked (GlcNAc...) asparagine). The helical transmembrane segment at 916-936 (SLLMLMLWVLPINVPILVVFV) threads the bilayer. N-linked (GlcNAc...) asparagine glycans are attached at residues asparagine 938 and asparagine 942. 2 helical membrane-spanning segments follow: residues 943–963 (WTTPFSSHHNFLAILPVILLM) and 985–1005 (AFLAYYVFYCLVYGIRHTYWI).

This sequence belongs to the GPI inositol-deacylase family.

It is found in the endoplasmic reticulum membrane. Functionally, involved in inositol deacylation of GPI-anchored proteins which plays important roles in the quality control and ER-associated degradation of GPI-anchored proteins. This is GPI inositol-deacylase (BST1) from Debaryomyces hansenii (strain ATCC 36239 / CBS 767 / BCRC 21394 / JCM 1990 / NBRC 0083 / IGC 2968) (Yeast).